The chain runs to 327 residues: uncharacterized protein (327 aa).

The signal sequence occupies residues 1 to 24 (MKQPGFIRLATLALLSTLSFFSHG).

This is an uncharacterized protein from Salmonella typhimurium (strain LT2 / SGSC1412 / ATCC 700720).